The sequence spans 610 residues: Fimbrin (610 aa).

EF-hand domains follow at residues Ser-7 to Lys-42 and Val-43 to His-78. 10 residues coordinate Ca(2+): Asp-20, Asn-22, Asp-24, Gln-26, Glu-31, Asp-56, Asp-58, Asn-60, Ser-62, and Glu-67. Actin-binding regions lie at residues Tyr-102 to Pro-365 and Ala-366 to Met-608. 4 consecutive Calponin-homology (CH) domains span residues Asp-116–Leu-232, Leu-260–Pro-365, Thr-379–Val-488, and Pro-501–Met-608.

Functionally, binds to actin. The protein is Fimbrin (fimA) of Dictyostelium discoideum (Social amoeba).